The chain runs to 990 residues: MAEDTEMPDAEAVRENTLMYGHDDELDEKFPTRPMNLHKSPPFHTLFTDLFDPLMETQKKGRQPPGPRRKAGPHGHSNLSPHEAKRNIIERFIASWRKTVGNDFYPAMRLIIPDKDRDRAMYGLKEKAIAKVLIKLTKISKDSDDAKQMLNWKLPGQLHKASASTAGDFAGRCYQVLSSRQLNTKLGDMSIAEVNNALDKLSQLGSEDEQVKIFQRFNRRMNAEEMTWLIRIILRQMKIGATEKTFLDIWHPDAETLFNISSNLRRVCWELYDPKVRLEGEDTGLSLMQCFQPQLAAFQDKGGSFEKIVARLQANSDDDSFWIEEKLDGERMQLHMIEDPEAPGGKLFGFWSRKAKDYAYLYGKHLQGDEAGALTRFITDAFGKNVRNIILDGEMITWDMDVDHIVGFGTLKTAAISEKENKTDKSTGQRPLFRVFDCVYLNDKLLTPYTLRDRRRALESAVKDVKRRLEIHPYIEAHSHTEIEPALRKVVAESSEGLVLKNPRSMYRLNDRNADWMKVKPEYMSEFGESLDCIVVGGYFGSGHRGGAHSSFLCALLLNKDAKPGDADYEKCWSFFKVGGGFSREDYAAIRGRTEGKWKDWDPRRPPPIIELGGHEQNRQHERPDQWIHPSDSVVLECKAASVEGSDKFRFNLTLRFPRFRMLRTDKRWDQALSREEFYEIKANVEYKREEKEKEFEIEKSRRKRTRTTKKPIVVAGSETITTPYAGPQSKIFDGLSFYIMTEQLHPTKKSKVDLEALVKANGGRVVQRDSMEPNLVIVADKRLIKVASLEKRDTNNIVKPVWIQDTIQQNEVDNGALPYLLPFEPNRHMFYLLGDNQLDYEANADDYGDSYARDIADVEEMRKILGATDPPQKRTKFDRESFLDQLEDHGDSLSHLKTYMFSSTKVAFRTSDDPVWTLRAQLAGNYIRFGGGQITEDEDEEGVTHTVVPDGQTASVSRVADLSRVVGVGWVQKCWDESTRLDEERYQWG.

Residues 57–84 (TQKKGRQPPGPRRKAGPHGHSNLSPHEA) form a disordered region. Glutamate 324, lysine 326, leucine 327, arginine 331, glutamate 394, phenylalanine 436, glutamate 496, lysine 501, lysine 518, and lysine 520 together coordinate ATP. Residue lysine 326 is the N6-AMP-lysine intermediate of the active site. Glutamate 394 contacts Mg(2+). Mg(2+) is bound at residue glutamate 496. BRCT domains are found at residues 728-821 (PQSK…LPYL) and 900-989 (YMFS…RYQW).

It belongs to the ATP-dependent DNA ligase family. Mg(2+) is required as a cofactor.

It localises to the nucleus. The catalysed reaction is ATP + (deoxyribonucleotide)n-3'-hydroxyl + 5'-phospho-(deoxyribonucleotide)m = (deoxyribonucleotide)n+m + AMP + diphosphate.. DNA ligase involved in DNA non-homologous end joining (NHEJ); required for double-strand break (DSB) repair. In Phaeosphaeria nodorum (strain SN15 / ATCC MYA-4574 / FGSC 10173) (Glume blotch fungus), this protein is DNA ligase 4 (LIG4).